Reading from the N-terminus, the 605-residue chain is Adaptin medium chain homolog APM2 (605 aa).

The interval 150–196 (EEWSPGEESSSSSGSDSDSEYSNTNKRKDKKKKRKKKKGTKGKSVGK) is disordered. A compositionally biased stretch (low complexity) spans 155 to 171 (GEESSSSSGSDSDSEYS). Residues 174–196 (NKRKDKKKKRKKKKGTKGKSVGK) are compositionally biased toward basic residues. The MHD domain maps to 269–604 (KNEFFLDVIE…TVSDEEYAYI (336 aa)).

This sequence belongs to the adaptor complexes medium subunit family. As to quaternary structure, component of the AP-1R complex composed of at least APM2, APL4 and APS1. Interacts with MIL1. Interacts with APL2.

The protein localises to the golgi apparatus membrane. The protein resides in the early endosome membrane. It is found in the cytoplasmic vesicle. It localises to the clathrin-coated vesicle membrane. Functionally, component of the AP-1-related (AP-1R) complex, an adapter protein complex that mediates of cargo protein sorting in clathrin-coated vesicles. AP-1R has a specific role in SNARE SNC1 sorting. In contrast to the APM1-containing AP-1 complex, AP-1R is incapable of sorting CHS3. This chain is Adaptin medium chain homolog APM2 (APM2), found in Saccharomyces cerevisiae (strain ATCC 204508 / S288c) (Baker's yeast).